The chain runs to 48 residues: Glycine-rich RNA-binding protein 3 (48 aa).

This Populus euphratica (Euphrates poplar) protein is Glycine-rich RNA-binding protein 3.